Reading from the N-terminus, the 82-residue chain is UPF0154 protein SPD_1662 (82 aa).

A helical transmembrane segment spans residues 5–25 (LAIVLIVLAFLGGALGGMYLV).

This sequence belongs to the UPF0154 family.

The protein localises to the cell membrane. This Streptococcus pneumoniae serotype 2 (strain D39 / NCTC 7466) protein is UPF0154 protein SPD_1662.